The sequence spans 504 residues: ATP synthase subunit alpha 2 (504 aa).

169–176 (GDRQTGKT) is a binding site for ATP.

It belongs to the ATPase alpha/beta chains family. F-type ATPases have 2 components, CF(1) - the catalytic core - and CF(0) - the membrane proton channel. CF(1) has five subunits: alpha(3), beta(3), gamma(1), delta(1), epsilon(1). CF(0) has three main subunits: a(1), b(2) and c(9-12). The alpha and beta chains form an alternating ring which encloses part of the gamma chain. CF(1) is attached to CF(0) by a central stalk formed by the gamma and epsilon chains, while a peripheral stalk is formed by the delta and b chains.

Its subcellular location is the cell membrane. It catalyses the reaction ATP + H2O + 4 H(+)(in) = ADP + phosphate + 5 H(+)(out). Functionally, produces ATP from ADP in the presence of a proton gradient across the membrane. The alpha chain is a regulatory subunit. This is ATP synthase subunit alpha 2 from Listeria welshimeri serovar 6b (strain ATCC 35897 / DSM 20650 / CCUG 15529 / CIP 8149 / NCTC 11857 / SLCC 5334 / V8).